A 157-amino-acid polypeptide reads, in one-letter code: Probable chemoreceptor glutamine deamidase CheD (157 aa).

Belongs to the CheD family.

It catalyses the reaction L-glutaminyl-[protein] + H2O = L-glutamyl-[protein] + NH4(+). Functionally, probably deamidates glutamine residues to glutamate on methyl-accepting chemotaxis receptors (MCPs), playing an important role in chemotaxis. In Archaeoglobus fulgidus (strain ATCC 49558 / DSM 4304 / JCM 9628 / NBRC 100126 / VC-16), this protein is Probable chemoreceptor glutamine deamidase CheD.